The following is a 272-amino-acid chain: R-spondin-3 (272 aa).

The N-terminal stretch at 1-21 is a signal peptide; the sequence is MHLRLISWLFIILNFMEYIGS. 2 FU repeats span residues 35–86 and 92–135; these read PNVS…GYYG and INKC…GLEA. Asparagine 36 carries N-linked (GlcNAc...) asparagine glycosylation. 11 disulfide bridges follow: cysteine 41/cysteine 48, cysteine 45/cysteine 54, cysteine 57/cysteine 76, cysteine 80/cysteine 95, cysteine 98/cysteine 105, cysteine 102/cysteine 111, cysteine 114/cysteine 125, cysteine 129/cysteine 142, cysteine 148/cysteine 190, cysteine 159/cysteine 166, and cysteine 199/cysteine 206. Residues 147–207 enclose the TSP type-1 domain; sequence HCEVSEWNPW…KCTVQRKKCQ (61 aa). The tract at residues 201–272 is disordered; it reads VQRKKCQKGE…QKSVSVSTVH (72 aa). Over residues 213 to 223 the composition is skewed to basic residues; that stretch reads KKGRERKRKKP. The segment covering 224–252 has biased composition (basic and acidic residues); that stretch reads NKGESKEAIPDSKSLESSKEIPEQRENKQ.

This sequence belongs to the R-spondin family. Interacts with the extracellular domain of FZD8 and LRP6. It however does not form a ternary complex with FZD8 and LRP6. Interacts with WNT1. Binds heparin. Interacts with LGR4, LGR5 and LGR6. In terms of tissue distribution, ubiquitously expressed. Expressed at higher level in placenta, small intestine, fetal thymus and lymph node. Highly expressed in endothelial cells.

It is found in the secreted. In terms of biological role, activator of the canonical Wnt signaling pathway by acting as a ligand for LGR4-6 receptors, which acts as a key regulator of angiogenesis. Upon binding to LGR4-6 (LGR4, LGR5 or LGR6), LGR4-6 associate with phosphorylated LRP6 and frizzled receptors that are activated by extracellular Wnt receptors, triggering the canonical Wnt signaling pathway to increase expression of target genes. Also regulates the canonical Wnt/beta-catenin-dependent pathway and non-canonical Wnt signaling by acting as an inhibitor of ZNRF3, an important regulator of the Wnt signaling pathway. Acts as a ligand for frizzled FZD8 and LRP6. May negatively regulate the TGF-beta pathway. Acts as a key regulator of angiogenesis by controlling vascular stability and pruning: acts by activating the non-canonical Wnt signaling pathway in endothelial cells. Can also amplify Wnt signaling pathway independently of LGR4-6 receptors, possibly by acting as a direct antagonistic ligand to RNF43 and ZNRF3. This is R-spondin-3 (RSPO3) from Homo sapiens (Human).